Consider the following 363-residue polypeptide: Ribosome-binding ATPase YchF (363 aa).

The 254-residue stretch at 3–256 folds into the OBG-type G domain; it reads FKCGIVGLPN…LDDEEKVEFL (254 aa). 12–17 is an ATP binding site; that stretch reads NVGKST. Ser16 and Thr36 together coordinate Mg(2+). The TGS domain maps to 278–361; sequence NLQTYFTAGV…QDGDVMHFRF (84 aa).

The cofactor is Mg(2+).

Functionally, ATPase that binds to both the 70S ribosome and the 50S ribosomal subunit in a nucleotide-independent manner. Does not hydrolyze GTP. The protein is Ribosome-binding ATPase YchF of Haemophilus influenzae (strain ATCC 51907 / DSM 11121 / KW20 / Rd).